Reading from the N-terminus, the 968-residue chain is Alanine--tRNA ligase, cytoplasmic (968 aa).

N-acetylmethionine is present on Met-1. Residues Ser-3 and Ser-8 each carry the phosphoserine modification. Residue Lys-19 is modified to N6-acetyllysine. ATP-binding positions include Arg-77, His-95, Trp-176, and 214 to 216 (IWN). Asn-216 and Asp-239 together coordinate L-alanine. ATP is bound at residue Gly-243. Ser-399 and Ser-555 each carry phosphoserine. Zn(2+) is bound by residues His-605, His-609, Cys-723, and His-727. The Nuclear localization signal motif lies at 750–763 (RRIVAVTGAEAQKA). Lys-876 bears the N6-acetyllysine mark. N6,N6,N6-trimethyllysine; alternate is present on Lys-943. Lys-943 is modified (N6,N6-dimethyllysine; alternate). Lys-943 carries the post-translational modification N6-methyllysine; alternate.

The protein belongs to the class-II aminoacyl-tRNA synthetase family. In terms of assembly, monomer. Interacts with ANKRD16; the interaction is direct. It depends on Zn(2+) as a cofactor. ISGylated. Post-translationally, methylation at 'Lys-943' by METTL21C.

It localises to the cytoplasm. The protein localises to the nucleus. The catalysed reaction is tRNA(Ala) + L-alanine + ATP = L-alanyl-tRNA(Ala) + AMP + diphosphate. The enzyme catalyses (S)-lactate + ATP + H(+) = (S)-lactoyl-AMP + diphosphate. It carries out the reaction (S)-lactoyl-AMP + L-lysyl-[protein] = N(6)-[(S)-lactoyl]-L-lysyl-[protein] + AMP + 2 H(+). The protein lactyltransferase activity is inhibited by beta-alanine. Catalyzes the attachment of alanine to tRNA(Ala) in a two-step reaction: alanine is first activated by ATP to form Ala-AMP and then transferred to the acceptor end of tRNA(Ala). Also edits incorrectly charged tRNA(Ala) via its editing domain. In presence of high levels of lactate, also acts as a protein lactyltransferase that mediates lactylation of lysine residues in target proteins, such as TEAD1, TP53/p53 and YAP1. Protein lactylation takes place in a two-step reaction: lactate is first activated by ATP to form lactate-AMP and then transferred to lysine residues of target proteins. Acts as an inhibitor of TP53/p53 activity by catalyzing lactylation of TP53/p53. Acts as a positive regulator of the Hippo pathway by mediating lactylation of TEAD1 and YAP1. This is Alanine--tRNA ligase, cytoplasmic (AARS1) from Pongo abelii (Sumatran orangutan).